We begin with the raw amino-acid sequence, 908 residues long: Vacuolar membrane protease (908 aa).

The interval 1–25 (MTSGEEEEGTREQVPVSQPTGTTSI) is disordered. Residues 1-48 (MTSGEEEEGTREQVPVSQPTGTTSIVSTKEKQPNIFIRAIRATFGYRK) lie on the Cytoplasmic side of the membrane. Positions 15–25 (PVSQPTGTTSI) are enriched in polar residues. Residues 49 to 69 (TSLTLFVLLTIFFTVAFSSYD) traverse the membrane as a helical segment. Residues 70-381 (NSLDFTIDLP…FSTSVTTLNT (312 aa)) are Vacuolar-facing. 2 N-linked (GlcNAc...) asparagine glycosylation sites follow: Asn143 and Asn162. Zn(2+) is bound by residues His176 and Asp188. Glu221 serves as the catalytic Proton acceptor. Zn(2+)-binding residues include Glu222, Glu247, and His319. A glycan (N-linked (GlcNAc...) asparagine) is linked at Asn354. Residues 382-402 (INMVLIVLFPVLSGPLLFITV) form a helical membrane-spanning segment. Topologically, residues 403–411 (RYKKWNIGT) are cytoplasmic. A helical transmembrane segment spans residues 412–432 (ANLFSLPLAIVITSLVGAVVV). Over 433–449 (NQGFRLVNEFLPASRPM) the chain is Vacuolar. A helical transmembrane segment spans residues 450–470 (LLVTTTTSILLLTYYILLNGI). Residues 471-480 (NFVSPSGDQK) lie on the Cytoplasmic side of the membrane. Residues 481–501 (LVSIIQISFIYWIALIFVTRG) form a helical membrane-spanning segment. At 502–514 (LSQNAIGDDHTGE) the chain is on the vacuolar side. Residues 515-535 (FAFTILFLLEATASLFGLIGW) traverse the membrane as a helical segment. Topologically, residues 536 to 602 (TFTRSVKEPT…MQHFGYDWSL (67 aa)) are cytoplasmic. Residues 543 to 584 (EPTGDEEPLLNGRMERYVDGSDDEDDVEEEDDEDQSEEENHQ) form a disordered region. Residues 562 to 579 (GSDDEDDVEEEDDEDQSE) are compositionally biased toward acidic residues. A helical membrane pass occupies residues 603–623 (QFLLIVPISSLVIYNSGWLVI). Residues 624-638 (DGINKSIQESLVAEN) are Vacuolar-facing. The N-linked (GlcNAc...) asparagine glycan is linked to Asn627. Residues 639 to 659 (FIYLIIQLFSQFWILPILPFV) form a helical membrane-spanning segment. The Cytoplasmic portion of the chain corresponds to 660-664 (YKLNR). The helical transmembrane segment at 665–685 (FMVLGLIAFALVGVTLISSVD) threads the bilayer. The Vacuolar portion of the chain corresponds to 686–908 (PFNQDNPLKL…LVSLTNRIEV (223 aa)). 2 N-linked (GlcNAc...) asparagine glycosylation sites follow: Asn752 and Asn764.

The protein belongs to the peptidase M28 family. It depends on Zn(2+) as a cofactor.

The protein resides in the vacuole membrane. Its function is as follows. May be involved in vacuolar sorting and osmoregulation. The protein is Vacuolar membrane protease of Candida tropicalis (strain ATCC MYA-3404 / T1) (Yeast).